Reading from the N-terminus, the 214-residue chain is Adenylate kinase (214 aa).

10–15 (GAGKGT) provides a ligand contact to ATP. Positions 30-59 (STGDMLRAAIKAGTELGKQAKSVIDAGQLV) are NMP. Residues Thr-31, Arg-36, 57 to 59 (QLV), 85 to 88 (GFPR), and Gln-92 contribute to the AMP site. Positions 122-159 (GRRAHLPSGRTYHVVYNPPKEEGKDDETGEPLVIREDD) are LID. ATP-binding positions include Arg-123 and 132–133 (TY). Arg-156 and Arg-167 together coordinate AMP. Lys-200 provides a ligand contact to ATP.

It belongs to the adenylate kinase family. As to quaternary structure, monomer.

The protein resides in the cytoplasm. It carries out the reaction AMP + ATP = 2 ADP. Its pathway is purine metabolism; AMP biosynthesis via salvage pathway; AMP from ADP: step 1/1. In terms of biological role, catalyzes the reversible transfer of the terminal phosphate group between ATP and AMP. Plays an important role in cellular energy homeostasis and in adenine nucleotide metabolism. The chain is Adenylate kinase from Aliivibrio fischeri (strain ATCC 700601 / ES114) (Vibrio fischeri).